We begin with the raw amino-acid sequence, 122 residues long: Glucagon-2 (122 aa).

The first 21 residues, 1-21 (MTSLHSLAGLLLLMIIQSSWQ), serve as a signal peptide directing secretion. 2 consecutive propeptides follow at residues 83-86 (NGLF) and glutamate 122.

Belongs to the glucagon family.

The protein localises to the secreted. In terms of biological role, promotes hydrolysis of glycogen and lipids, and raises the blood sugar level. This Lophius americanus (American angler) protein is Glucagon-2 (gcg2).